Consider the following 32-residue polypeptide: Putative leucine-rich repeat protein PS14 (32 aa).

The polypeptide is Putative leucine-rich repeat protein PS14 (Pinus strobus (Eastern white pine)).